Consider the following 237-residue polypeptide: Ribonuclease PH (237 aa).

Residues Arg-86 and 124-126 (GTR) contribute to the phosphate site.

Belongs to the RNase PH family. Homohexameric ring arranged as a trimer of dimers.

It carries out the reaction tRNA(n+1) + phosphate = tRNA(n) + a ribonucleoside 5'-diphosphate. Functionally, phosphorolytic 3'-5' exoribonuclease that plays an important role in tRNA 3'-end maturation. Removes nucleotide residues following the 3'-CCA terminus of tRNAs; can also add nucleotides to the ends of RNA molecules by using nucleoside diphosphates as substrates, but this may not be physiologically important. Probably plays a role in initiation of 16S rRNA degradation (leading to ribosome degradation) during starvation. This is Ribonuclease PH from Bradyrhizobium diazoefficiens (strain JCM 10833 / BCRC 13528 / IAM 13628 / NBRC 14792 / USDA 110).